The following is a 555-amino-acid chain: Glutamine--tRNA ligase (555 aa).

Positions 34 to 44 match the 'HIGH' region motif; the sequence is PEPNGYLHIGH. ATP-binding positions include 35–37 and 41–47; these read EPN and HIGHAKS. Asp67 and Tyr212 together coordinate L-glutamine. ATP contacts are provided by residues Thr231, 261–262, and 269–271; these read RL and MSK. Positions 268 to 272 match the 'KMSKS' region motif; that stretch reads VMSKR. The interaction with tRNA stretch occupies residues 317-324; that stretch reads TKQDNTIE.

This sequence belongs to the class-I aminoacyl-tRNA synthetase family. In terms of assembly, monomer.

The protein resides in the cytoplasm. It catalyses the reaction tRNA(Gln) + L-glutamine + ATP = L-glutaminyl-tRNA(Gln) + AMP + diphosphate. The chain is Glutamine--tRNA ligase from Salmonella agona (strain SL483).